A 309-amino-acid polypeptide reads, in one-letter code: Oxidoreductase NAD-binding domain-containing protein 1 (309 aa).

A signal peptide spans 1 to 14 (MVVVIPRLLRGSLG). The FAD-binding FR-type domain occupies 47–161 (HLERTADVVR…VGGEFFFDPK (115 aa)). 175–180 (GVGINP) is a binding site for NAD(+).

The sequence is that of Oxidoreductase NAD-binding domain-containing protein 1 (OXNAD1) from Bos taurus (Bovine).